The chain runs to 196 residues: Thymidine kinase (196 aa).

Residues serine 9–serine 16 and aspartate 87–glutamine 90 each bind ATP. Glutamate 88 (proton acceptor) is an active-site residue. Zn(2+)-binding residues include cysteine 145, cysteine 147, cysteine 182, and histidine 185.

Belongs to the thymidine kinase family. As to quaternary structure, homotetramer.

It is found in the cytoplasm. It catalyses the reaction thymidine + ATP = dTMP + ADP + H(+). This chain is Thymidine kinase, found in Yersinia pestis.